Reading from the N-terminus, the 284-residue chain is Ermin (284 aa).

Positions 1 to 61 are disordered; the sequence is MTDVPATFTQ…APTKGSQEER (61 aa). Ser73 is subject to Phosphoserine. The tract at residues 108–251 is disordered; that stretch reads TFREGRQWEK…PTLGKKSDIS (144 aa). 2 stretches are compositionally biased toward basic and acidic residues: residues 126–140 and 171–183; these read EIRR…QPLK and LHSK…KVWD. The segment covering 184–200 has biased composition (acidic residues); that stretch reads EEIDDDDDDNCNDDEDE. The span at 201–220 shows a compositional bias: basic and acidic residues; the sequence is VRVIEFKKKHEEVSQFKEEG. Phosphoserine is present on residues Ser214, Ser226, Ser230, and Ser233. A compositionally biased stretch (low complexity) spans 225-235; the sequence is DSPLSSASSQA. Thr237 is modified (phosphothreonine). The segment at 265–284 is binds actin; sequence KIRKGNTKQRIDEFESMMHL.

Binds actin.

The protein resides in the cytoplasm. The protein localises to the cytoskeleton. Its function is as follows. Plays a role in cytoskeletal rearrangements during the late wrapping and/or compaction phases of myelinogenesis as well as in maintenance and stability of myelin sheath in the adult. May play an important role in late-stage oligodendroglia maturation, myelin/Ranvier node formation during CNS development, and in the maintenance and plasticity of related structures in the mature CNS. This Pongo abelii (Sumatran orangutan) protein is Ermin (ERMN).